The chain runs to 360 residues: Heme A synthase (360 aa).

Transmembrane regions (helical) follow at residues 29-49, 111-131, 139-159, 175-195, 210-230, 269-289, 309-329, and 330-350; these read WLFL…ATRL, FLGR…WWTG, LGLV…WIMV, LAAH…LAAG, LTAL…GLVA, VALV…LALL, ALAG…LLAV, and PLWA…MAVA. Histidine 276 serves as a coordination point for heme. Histidine 337 lines the heme pocket.

The protein belongs to the COX15/CtaA family. Type 2 subfamily. In terms of assembly, interacts with CtaB. Heme b is required as a cofactor.

Its subcellular location is the cell membrane. The catalysed reaction is Fe(II)-heme o + 2 A + H2O = Fe(II)-heme a + 2 AH2. It participates in porphyrin-containing compound metabolism; heme A biosynthesis; heme A from heme O: step 1/1. Functionally, catalyzes the conversion of heme O to heme A by two successive hydroxylations of the methyl group at C8. The first hydroxylation forms heme I, the second hydroxylation results in an unstable dihydroxymethyl group, which spontaneously dehydrates, resulting in the formyl group of heme A. This Methylobacterium sp. (strain 4-46) protein is Heme A synthase.